The primary structure comprises 542 residues: Phosphoenolpyruvate carboxykinase (ATP) (542 aa).

Substrate contacts are provided by R67, Y208, and K214. ATP contacts are provided by residues K214, H233, and 249 to 257 (GLSGTGKTT). Mn(2+) is bound by residues K214 and H233. D270 is a Mn(2+) binding site. ATP contacts are provided by residues E298, R334, 450–451 (RI), and T456. A substrate-binding site is contributed by R334.

The protein belongs to the phosphoenolpyruvate carboxykinase (ATP) family. Monomer. The cofactor is Mn(2+).

It localises to the cytoplasm. It catalyses the reaction oxaloacetate + ATP = phosphoenolpyruvate + ADP + CO2. The protein operates within carbohydrate biosynthesis; gluconeogenesis. In terms of biological role, involved in the gluconeogenesis. Catalyzes the conversion of oxaloacetate (OAA) to phosphoenolpyruvate (PEP) through direct phosphoryl transfer between the nucleoside triphosphate and OAA. In Vibrio vulnificus (strain CMCP6), this protein is Phosphoenolpyruvate carboxykinase (ATP).